A 623-amino-acid chain; its full sequence is NAD-dependent malic enzyme, mitochondrial (623 aa).

A mitochondrion-targeting transit peptide spans 1 to 31 (MLVLCSRSRLTSSLIRRLKDQIANVSNHRSF). 2 residues coordinate fumarate: arginine 88 and arginine 122. The Proton donor role is filled by serine 143. Arginine 196 contributes to the (S)-malate binding site. Arginine 196 contacts NAD(+). Catalysis depends on lysine 214, which acts as the Proton acceptor. A divalent metal cation-binding residues include glutamate 285 and aspartate 286. Position 289 (asparagine 289) interacts with NAD(+). An a divalent metal cation-binding site is contributed by aspartate 309. Alanine 345 contacts NAD(+). Residues asparagine 464 and asparagine 509 each coordinate (S)-malate.

The protein belongs to the malic enzymes family. In terms of assembly, heterodimer of two related subunits. Mg(2+) serves as cofactor. The cofactor is Mn(2+).

It localises to the mitochondrion matrix. It carries out the reaction (S)-malate + NAD(+) = pyruvate + CO2 + NADH. The protein operates within photosynthesis; C4 acid pathway. This Amaranthus hypochondriacus (Prince-of-Wales feather) protein is NAD-dependent malic enzyme, mitochondrial.